The chain runs to 304 residues: Ribosomal RNA small subunit methyltransferase H (304 aa).

Residues 37–39, D57, F85, D100, and H107 each bind S-adenosyl-L-methionine; that span reads GGH.

This sequence belongs to the methyltransferase superfamily. RsmH family.

Its subcellular location is the cytoplasm. It carries out the reaction cytidine(1402) in 16S rRNA + S-adenosyl-L-methionine = N(4)-methylcytidine(1402) in 16S rRNA + S-adenosyl-L-homocysteine + H(+). Specifically methylates the N4 position of cytidine in position 1402 (C1402) of 16S rRNA. The chain is Ribosomal RNA small subunit methyltransferase H from Azobacteroides pseudotrichonymphae genomovar. CFP2.